Consider the following 653-residue polypeptide: Endoglin (653 aa).

Positions 1–24 are cleaved as a signal peptide; sequence MDRGVLPQAIALLLAVCSFGPTAG. Topologically, residues 25–581 are extracellular; sequence LAEGVQCDLQ…IVSPGLPDKG (557 aa). The tract at residues 27-44 is OR1, N-terminal part; the sequence is EGVQCDLQPVDPKVTYTT. Positions 27–336 are required for interaction with GDF2; that stretch reads EGVQCDLQPV…RSCGSGLQPS (310 aa). 7 disulfide bridges follow: C31–C206, C51–C181, C241–C329, C349–C381, C362–C442, C393–C411, and C493–C549. An OR2 region spans residues 45–198; the sequence is SQVSEGCVAH…MGHTLEWKSH (154 aa). A glycan (N-linked (GlcNAc...) asparagine) is linked at N57. The segment at 199–329 is OR1, C-terminal part; sequence TQASVLGCHL…SVISLQDRSC (131 aa). Residues 269–281 are essential for interaction with GDF2; it reads KAWTTGEYSFKIF. N-linked (GlcNAc...) asparagine glycosylation occurs at N306. The region spanning 362–512 is the ZP domain; sequence CSDDVMTLVL…MVDLIQNQEA (151 aa). The helical transmembrane segment at 582-606 threads the bilayer; it reads LVLPAVLGITFGAFLIGALLTAALW. Residues 607–653 are Cytoplasmic-facing; the sequence is YIHSHTRHPGKREPVVAVAAPASSESSSTNHSIGSTQSTPCSTSSMA. Low complexity predominate over residues 625–634; that stretch reads AAPASSESSS. Residues 625 to 653 form a disordered region; that stretch reads AAPASSESSSTNHSIGSTQSTPCSTSSMA. The segment covering 635–653 has biased composition (polar residues); that stretch reads TNHSIGSTQSTPCSTSSMA. Phosphoserine; by TGFBR1 is present on residues S641 and S644.

In terms of assembly, homodimer; disulfide-linked. Forms a heteromeric complex with the signaling receptors for transforming growth factor-beta: TGFBR1 and/or TGFBR2. It is able to bind TGFB1 and TGFB2 with high affinity, but not TGFB3. Interacts with GDF2, forming a heterotetramer with a 2:2 stoichiometry. Interacts with ACVRL1. Can form a heteromeric complex with GDF2 and ACVRL1. Interacts with BMP10. Interacts with DYNLT4. Interacts with ARRB2.

The protein localises to the cell membrane. Vascular endothelium glycoprotein that plays an important role in the regulation of angiogenesis. Required for normal structure and integrity of adult vasculature. Regulates the migration of vascular endothelial cells. Required for normal extraembryonic angiogenesis and for embryonic heart development. May regulate endothelial cell shape changes in response to blood flow, which drive vascular remodeling and establishment of normal vascular morphology during angiogenesis. May play a role in the binding of endothelial cells to integrins. Acts as a TGF-beta coreceptor and is involved in the TGF-beta/BMP signaling cascade that ultimately leads to the activation of SMAD transcription factors. Required for GDF2/BMP9 signaling through SMAD1 in endothelial cells and modulates TGFB1 signaling through SMAD3. This Sus scrofa (Pig) protein is Endoglin (ENG).